The primary structure comprises 1039 residues: Probable inorganic carbon transporter subunit DabA 2 (1039 aa).

Zn(2+) contacts are provided by Cys-462, Asp-464, His-721, and Cys-736.

It belongs to the inorganic carbon transporter (TC 9.A.2) DabA family. Forms a complex with DabB. Zn(2+) is required as a cofactor.

The protein resides in the cell inner membrane. Its function is as follows. Part of an energy-coupled inorganic carbon pump. The sequence is that of Probable inorganic carbon transporter subunit DabA 2 from Nitrobacter hamburgensis (strain DSM 10229 / NCIMB 13809 / X14).